The chain runs to 24 residues: Caerulein precursor fragment BM1 (24 aa).

In terms of tissue distribution, expressed by the skin glands.

It localises to the secreted. Antimicrobial peptide. This Xenopus boumbaensis (Mawa clawed frog) protein is Caerulein precursor fragment BM1.